The chain runs to 418 residues: Mitochondrial outer membrane protein SLC25A46 (418 aa).

2 positions are modified to phosphoserine: S32 and S35. T45 bears the Phosphothreonine mark. The segment at P46 to Q96 is disordered. A Solcar 1 repeat occupies Q96–P187. The next 6 membrane-spanning stretches (helical) occupy residues F103–L123, F167–P187, H202–I222, L258–I278, F314–L334, and V382–I402. Residues D311 to L413 form a Solcar 2 repeat.

The protein belongs to the mitochondrial carrier (TC 2.A.29) family. As to quaternary structure, associates with the mitochondrial contact site and cristae organizing system (MICOS) complex. May associate with the endoplasmic reticulum membrane protein complex (EMC).

Its subcellular location is the mitochondrion outer membrane. Its function is as follows. Transmembrane protein of the mitochondrial outer membrane that controls mitochondrial organization. May regulate the assembly of the MICOS (mitochondrial contact site and cristae organizing system) complex which is essential to the biogenesis and dynamics of mitochondrial cristae, the inwards folds of the inner mitochondrial membrane. Through its interaction with the EMC (endoplasmic reticulum membrane protein complex), could regulate mitochondrial lipid homeostasis and thereby mitochondrial fission. The chain is Mitochondrial outer membrane protein SLC25A46 from Mus musculus (Mouse).